We begin with the raw amino-acid sequence, 219 residues long: Thiamine-phosphate synthase (219 aa).

Residues 48–52 and asparagine 80 each bind 4-amino-2-methyl-5-(diphosphooxymethyl)pyrimidine; that span reads QLREK. Residues aspartate 81 and aspartate 100 each coordinate Mg(2+). Position 119 (serine 119) interacts with 4-amino-2-methyl-5-(diphosphooxymethyl)pyrimidine. 145 to 147 provides a ligand contact to 2-[(2R,5Z)-2-carboxy-4-methylthiazol-5(2H)-ylidene]ethyl phosphate; it reads TPT. Residue lysine 148 participates in 4-amino-2-methyl-5-(diphosphooxymethyl)pyrimidine binding. 2-[(2R,5Z)-2-carboxy-4-methylthiazol-5(2H)-ylidene]ethyl phosphate is bound by residues glycine 176 and 196 to 197; that span reads VS.

Belongs to the thiamine-phosphate synthase family. It depends on Mg(2+) as a cofactor.

It catalyses the reaction 2-[(2R,5Z)-2-carboxy-4-methylthiazol-5(2H)-ylidene]ethyl phosphate + 4-amino-2-methyl-5-(diphosphooxymethyl)pyrimidine + 2 H(+) = thiamine phosphate + CO2 + diphosphate. The catalysed reaction is 2-(2-carboxy-4-methylthiazol-5-yl)ethyl phosphate + 4-amino-2-methyl-5-(diphosphooxymethyl)pyrimidine + 2 H(+) = thiamine phosphate + CO2 + diphosphate. The enzyme catalyses 4-methyl-5-(2-phosphooxyethyl)-thiazole + 4-amino-2-methyl-5-(diphosphooxymethyl)pyrimidine + H(+) = thiamine phosphate + diphosphate. Its pathway is cofactor biosynthesis; thiamine diphosphate biosynthesis; thiamine phosphate from 4-amino-2-methyl-5-diphosphomethylpyrimidine and 4-methyl-5-(2-phosphoethyl)-thiazole: step 1/1. In terms of biological role, condenses 4-methyl-5-(beta-hydroxyethyl)thiazole monophosphate (THZ-P) and 2-methyl-4-amino-5-hydroxymethyl pyrimidine pyrophosphate (HMP-PP) to form thiamine monophosphate (TMP). The protein is Thiamine-phosphate synthase of Albidiferax ferrireducens (strain ATCC BAA-621 / DSM 15236 / T118) (Rhodoferax ferrireducens).